A 112-amino-acid chain; its full sequence is Large ribosomal subunit protein bL17 (112 aa).

This sequence belongs to the bacterial ribosomal protein bL17 family. In terms of assembly, part of the 50S ribosomal subunit. Contacts protein L32.

The polypeptide is Large ribosomal subunit protein bL17 (Desulfitobacterium hafniense (strain DSM 10664 / DCB-2)).